The primary structure comprises 312 residues: Taste receptor type 2 member 7 (312 aa).

Topologically, residues 1-9 (MTYETDTTL) are extracellular. The helical transmembrane segment at 10–30 (MLVAVGEALVGILGNAFIALV) threads the bilayer. Residues 31–49 (NFMGWMKNRKIASIDLILS) are Cytoplasmic-facing. The helical transmembrane segment at 50-70 (SVAMSRICLQCIILLDCIILV) threads the bilayer. Topologically, residues 71–101 (QYPDTYNRGKEMRTVDFFWTLTNHLSVWFAT) are extracellular. Residues 102–122 (CLSIFYLFKIANFFHPLFLWI) traverse the membrane as a helical segment. Over 123 to 128 (KWRIDK) the chain is Cytoplasmic. A helical membrane pass occupies residues 129-149 (LILRTLLACVIISLCFSLPVT). The Extracellular segment spans residues 150–187 (ENLSDDFRRCVKTKERINSTLRCKVNKAGHASVKVNLN). N-linked (GlcNAc...) asparagine glycans are attached at residues N151 and N167. Residues 188–208 (LVMLFPFSVSLVSFLLLILSL) form a helical membrane-spanning segment. The Cytoplasmic segment spans residues 209 to 235 (WRHTRQIQLSVTGYKDPSTTAHVKAMK). Residues 236-256 (AVISFLALFVVYCLAFLIATS) traverse the membrane as a helical segment. Residues 257 to 266 (SYFMPESELA) lie on the Extracellular side of the membrane. Residues 267–287 (VIWGELIALIYPSSHSFILIL) traverse the membrane as a helical segment. Residues 288-312 (GSSKLKQASVRVLCRVKTMLKGKKY) lie on the Cytoplasmic side of the membrane.

The protein belongs to the G-protein coupled receptor T2R family. In terms of tissue distribution, expressed in subsets of taste receptor cells of the tongue and palate epithelium and exclusively in gustducin-positive cells. Expressed in 15% taste bud cells in circumvallate and foliate papillae but only in 2% in fungiform papillae. Expressed in gastric and duodenal tissues.

The protein resides in the membrane. Its function is as follows. Gustducin-coupled receptor implicated in the perception of bitter compounds in the oral cavity and the gastrointestinal tract. Signals through PLCB2 and the calcium-regulated cation channel TRPM5. This is Taste receptor type 2 member 7 (Tas2r7) from Mus musculus (Mouse).